A 495-amino-acid polypeptide reads, in one-letter code: UDP-N-acetylmuramoyl-L-alanyl-D-glutamate--2,6-diaminopimelate ligase (495 aa).

Ser29 is a binding site for UDP-N-acetyl-alpha-D-muramoyl-L-alanyl-D-glutamate. 111 to 117 (GTNGKTS) serves as a coordination point for ATP. UDP-N-acetyl-alpha-D-muramoyl-L-alanyl-D-glutamate-binding positions include 153–154 (TT), Ser180, Gln186, and Arg188. An N6-carboxylysine modification is found at Lys220. Residues Arg384, 408-411 (DNPR), Gly459, and Glu463 contribute to the meso-2,6-diaminopimelate site. The Meso-diaminopimelate recognition motif signature appears at 408 to 411 (DNPR).

Belongs to the MurCDEF family. MurE subfamily. It depends on Mg(2+) as a cofactor. Carboxylation is probably crucial for Mg(2+) binding and, consequently, for the gamma-phosphate positioning of ATP.

It is found in the cytoplasm. It carries out the reaction UDP-N-acetyl-alpha-D-muramoyl-L-alanyl-D-glutamate + meso-2,6-diaminopimelate + ATP = UDP-N-acetyl-alpha-D-muramoyl-L-alanyl-gamma-D-glutamyl-meso-2,6-diaminopimelate + ADP + phosphate + H(+). The protein operates within cell wall biogenesis; peptidoglycan biosynthesis. In terms of biological role, catalyzes the addition of meso-diaminopimelic acid to the nucleotide precursor UDP-N-acetylmuramoyl-L-alanyl-D-glutamate (UMAG) in the biosynthesis of bacterial cell-wall peptidoglycan. The sequence is that of UDP-N-acetylmuramoyl-L-alanyl-D-glutamate--2,6-diaminopimelate ligase from Xylella fastidiosa (strain Temecula1 / ATCC 700964).